A 156-amino-acid polypeptide reads, in one-letter code: Methylated-DNA--protein-cysteine methyltransferase (156 aa).

The active-site Nucleophile; methyl group acceptor is Cys126.

Belongs to the MGMT family.

Its subcellular location is the cytoplasm. It carries out the reaction a 6-O-methyl-2'-deoxyguanosine in DNA + L-cysteinyl-[protein] = S-methyl-L-cysteinyl-[protein] + a 2'-deoxyguanosine in DNA. The catalysed reaction is a 4-O-methyl-thymidine in DNA + L-cysteinyl-[protein] = a thymidine in DNA + S-methyl-L-cysteinyl-[protein]. In terms of biological role, involved in the cellular defense against the biological effects of O6-methylguanine (O6-MeG) and O4-methylthymine (O4-MeT) in DNA. Repairs the methylated nucleobase in DNA by stoichiometrically transferring the methyl group to a cysteine residue in the enzyme. This is a suicide reaction: the enzyme is irreversibly inactivated. The protein is Methylated-DNA--protein-cysteine methyltransferase of Methanosarcina acetivorans (strain ATCC 35395 / DSM 2834 / JCM 12185 / C2A).